The chain runs to 287 residues: Fructose-1,6-bisphosphatase class 1 (287 aa).

Mg(2+)-binding residues include Glu-67, Asp-87, Leu-89, and Asp-90. Substrate-binding positions include 90–93, Tyr-195, and Lys-225; that span reads DGSS. Glu-231 is a binding site for Mg(2+).

This sequence belongs to the FBPase class 1 family. Homotetramer. It depends on Mg(2+) as a cofactor.

It localises to the cytoplasm. It catalyses the reaction beta-D-fructose 1,6-bisphosphate + H2O = beta-D-fructose 6-phosphate + phosphate. It functions in the pathway carbohydrate biosynthesis; gluconeogenesis. The protein is Fructose-1,6-bisphosphatase class 1 of Halobacterium salinarum (strain ATCC 29341 / DSM 671 / R1).